An 841-amino-acid chain; its full sequence is Protein NLP6 (841 aa).

One can recognise an RWP-RK domain in the interval 539-624 (EAKTVKKSER…IDSVQGADGS (86 aa)). The disordered stretch occupies residues 649 to 682 (NCPPTSTSPLSNLQDVKIENRDAEDSAGSSTSRA). Positions 651–662 (PPTSTSPLSNLQ) are enriched in polar residues. Residues 741–823 (LVSIKATYRE…NTLRLSVHDV (83 aa)) form the PB1 domain.

Its subcellular location is the nucleus. Its function is as follows. Probable transcription factor. This Arabidopsis thaliana (Mouse-ear cress) protein is Protein NLP6 (NLP6).